A 348-amino-acid chain; its full sequence is Histidinol-phosphate aminotransferase (348 aa).

An N6-(pyridoxal phosphate)lysine modification is found at Lys-207.

It belongs to the class-II pyridoxal-phosphate-dependent aminotransferase family. Histidinol-phosphate aminotransferase subfamily. As to quaternary structure, homodimer. Pyridoxal 5'-phosphate is required as a cofactor.

The enzyme catalyses L-histidinol phosphate + 2-oxoglutarate = 3-(imidazol-4-yl)-2-oxopropyl phosphate + L-glutamate. It participates in amino-acid biosynthesis; L-histidine biosynthesis; L-histidine from 5-phospho-alpha-D-ribose 1-diphosphate: step 7/9. In Rippkaea orientalis (strain PCC 8801 / RF-1) (Cyanothece sp. (strain PCC 8801)), this protein is Histidinol-phosphate aminotransferase.